Reading from the N-terminus, the 186-residue chain is piRNA-mediated silencing protein C19orf84 (186 aa).

2 disordered regions span residues 1 to 42 (MEQP…NSTD) and 89 to 186 (SQAG…ETEY). A compositionally biased stretch (polar residues) spans 13 to 22 (NNLSLPSSGT). Residues 24–36 (PWPPAPLPAPPPL) show a composition bias toward pro residues. Basic residues predominate over residues 114–126 (RPGWGRGLHRRGL). Residues 145–157 (RTPPMTLPSPPTL) show a composition bias toward pro residues.

As to quaternary structure, interacts with SPOCD1.

The protein resides in the nucleus. Its subcellular location is the nucleoplasm. Functionally, protein adapter involved in piRNA-directed transposon methylation by connecting PIWIL4-piRNA and DNA methylation machineries. The PIWIL4-piRNA pathway plays a central role during spermatogenesis by directing transposon DNA methylation and silencing, thereby preventing their mobilization, which is essential for the germline integrity. This chain is piRNA-mediated silencing protein C19orf84, found in Homo sapiens (Human).